We begin with the raw amino-acid sequence, 1010 residues long: Phosphoenolpyruvate carboxylase (1010 aa).

Polar residues predominate over residues 1-18 (MIMRSPETSGASMPQSTA). 2 disordered regions span residues 1–36 (MIMRSPETSGASMPQSTAHVPDGEQPRASGGSPGAG) and 132–154 (LRPSRSQDDETAAPFDPFAPPLA). Catalysis depends on residues histidine 195 and lysine 652. Residues 967–986 (QNRQPPMSESPGTPEDRRTY) are disordered.

It belongs to the PEPCase type 1 family. Mg(2+) serves as cofactor.

It carries out the reaction oxaloacetate + phosphate = phosphoenolpyruvate + hydrogencarbonate. Its function is as follows. Forms oxaloacetate, a four-carbon dicarboxylic acid source for the tricarboxylic acid cycle. The protein is Phosphoenolpyruvate carboxylase of Parasynechococcus marenigrum (strain WH8102).